Here is a 124-residue protein sequence, read N- to C-terminus: Small ribosomal subunit protein uS12 (124 aa).

D89 is modified (3-methylthioaspartic acid).

Belongs to the universal ribosomal protein uS12 family. In terms of assembly, part of the 30S ribosomal subunit. Contacts proteins S8 and S17. May interact with IF1 in the 30S initiation complex.

With S4 and S5 plays an important role in translational accuracy. Its function is as follows. Interacts with and stabilizes bases of the 16S rRNA that are involved in tRNA selection in the A site and with the mRNA backbone. Located at the interface of the 30S and 50S subunits, it traverses the body of the 30S subunit contacting proteins on the other side and probably holding the rRNA structure together. The combined cluster of proteins S8, S12 and S17 appears to hold together the shoulder and platform of the 30S subunit. In Shewanella denitrificans (strain OS217 / ATCC BAA-1090 / DSM 15013), this protein is Small ribosomal subunit protein uS12.